The following is an 883-amino-acid chain: Translation initiation factor IF-2 (883 aa).

The interval 1-259 (MVDTKTPGDK…GASKQRGRLT (259 aa)) is disordered. Low complexity-rich tracts occupy residues 10–22 (KTLT…LTLK) and 77–89 (PRQQ…PQQS). A compositionally biased stretch (basic and acidic residues) spans 113-184 (ARVREIEERK…GDAEPAKKPA (72 aa)). The segment covering 185–218 (ETSTTTTTAAPARPATTTTRTPTPAGRPPAVAAE) has biased composition (low complexity). Positions 235-244 (PARPAPPPKQ) are enriched in pro residues. Positions 379 to 548 (PRSPVVTVMG…MIALQAEILE (170 aa)) constitute a tr-type G domain. A G1 region spans residues 388–395 (GHVDHGKT). 388–395 (GHVDHGKT) contacts GTP. The interval 413–417 (GITQH) is G2. The tract at residues 436 to 439 (DTPG) is G3. GTP-binding positions include 436-440 (DTPGH) and 490-493 (NKID). Positions 490-493 (NKID) are G4. Positions 526 to 528 (SAK) are G5.

Belongs to the TRAFAC class translation factor GTPase superfamily. Classic translation factor GTPase family. IF-2 subfamily.

It localises to the cytoplasm. In terms of biological role, one of the essential components for the initiation of protein synthesis. Protects formylmethionyl-tRNA from spontaneous hydrolysis and promotes its binding to the 30S ribosomal subunits. Also involved in the hydrolysis of GTP during the formation of the 70S ribosomal complex. This is Translation initiation factor IF-2 from Rhodopseudomonas palustris (strain ATCC BAA-98 / CGA009).